A 98-amino-acid polypeptide reads, in one-letter code: NADH-ubiquinone oxidoreductase chain 4L (98 aa).

Transmembrane regions (helical) follow at residues 1 to 21, 29 to 49, and 61 to 81; these read MSIT…GLLL, SLLC…MIIL, and IILL…LVMV.

It belongs to the complex I subunit 4L family. As to quaternary structure, core subunit of respiratory chain NADH dehydrogenase (Complex I) which is composed of 45 different subunits.

Its subcellular location is the mitochondrion inner membrane. It catalyses the reaction a ubiquinone + NADH + 5 H(+)(in) = a ubiquinol + NAD(+) + 4 H(+)(out). In terms of biological role, core subunit of the mitochondrial membrane respiratory chain NADH dehydrogenase (Complex I) which catalyzes electron transfer from NADH through the respiratory chain, using ubiquinone as an electron acceptor. Part of the enzyme membrane arm which is embedded in the lipid bilayer and involved in proton translocation. The polypeptide is NADH-ubiquinone oxidoreductase chain 4L (MT-ND4L) (Platyrrhinus dorsalis (Thomas's broad-nosed bat)).